Reading from the N-terminus, the 264-residue chain is Large ribosomal subunit protein uL2 (264 aa).

The protein belongs to the universal ribosomal protein uL2 family.

Its subcellular location is the cytoplasm. This is Large ribosomal subunit protein uL2 (RPL8) from Tetrahymena thermophila (strain SB210).